The primary structure comprises 198 residues: Translation machinery-associated protein 22 (198 aa).

The SUI1 domain maps to 99–170 (VIIKREARTK…EVETYIHSLL (72 aa)).

Belongs to the DENR family. As to quaternary structure, interacts with the 40S ribosomal subunit.

The protein resides in the cytoplasm. The chain is Translation machinery-associated protein 22 (TMA22) from Saccharomyces cerevisiae (strain YJM789) (Baker's yeast).